Reading from the N-terminus, the 493-residue chain is Alpha-amylase-related protein (493 aa).

A signal peptide spans 1-19; sequence MFKFALTLTLCLAGSLSLA. Glutamine 20 carries the pyrrolidone carboxylic acid modification. A disulfide bridge connects residues cysteine 47 and cysteine 103. Positions 117, 168, and 177 each coordinate Ca(2+). Cysteine 156 and cysteine 170 are disulfide-bonded. Arginine 205 is a binding site for chloride. Catalysis depends on aspartate 207, which acts as the Nucleophile. Residue histidine 211 participates in Ca(2+) binding. Glutamate 244 functions as the Proton donor in the catalytic mechanism. 2 residues coordinate chloride: asparagine 307 and arginine 342. Intrachain disulfides connect cysteine 375–cysteine 381, cysteine 417–cysteine 440, and cysteine 447–cysteine 459.

This sequence belongs to the glycosyl hydrolase 13 family. In terms of assembly, monomer. Ca(2+) serves as cofactor. Requires chloride as cofactor.

The protein resides in the secreted. It carries out the reaction Endohydrolysis of (1-&gt;4)-alpha-D-glucosidic linkages in polysaccharides containing three or more (1-&gt;4)-alpha-linked D-glucose units.. The protein is Alpha-amylase-related protein (Amyrel) of Drosophila simulans (Fruit fly).